The sequence spans 65 residues: MKKEIHPEYVECKVSCACGNTFATKSNKAELRVDICSNCHPFFTGSEKIVDAAGRVEKFKKKYAM.

4 residues coordinate Zn(2+): Cys-16, Cys-18, Cys-36, and Cys-39.

Belongs to the bacterial ribosomal protein bL31 family. Type A subfamily. In terms of assembly, part of the 50S ribosomal subunit. The cofactor is Zn(2+).

Its function is as follows. Binds the 23S rRNA. The sequence is that of Large ribosomal subunit protein bL31 from Campylobacter jejuni subsp. doylei (strain ATCC BAA-1458 / RM4099 / 269.97).